We begin with the raw amino-acid sequence, 494 residues long: Solute carrier family 2, facilitated glucose transporter member 3 (494 aa).

Residues 1–10 (MGTTKVTAPL) are Cytoplasmic-facing. A helical membrane pass occupies residues 11–32 (IFAISVATIGSFQFGYNTGVIN). At 33–64 (APEAIIKDFLNYTLEERSEPPPSSVLLTSLWS) the chain is on the extracellular side. A glycan (N-linked (GlcNAc...) asparagine) is linked at Asn43. A helical transmembrane segment spans residues 65–85 (LSVAIFSVGGMIGSFSVGLFV). Residues 86 to 90 (NRFGR) lie on the Cytoplasmic side of the membrane. The chain crosses the membrane as a helical span at residues 91-111 (GNSMLIVNLLAIAGGCLMGFC). Topologically, residues 112–118 (KIAESVE) are extracellular. A helical transmembrane segment spans residues 119-142 (MLILGRLIIGLFCGLCTGFVPMYI). Residues 143-153 (GEISPTALRGA) lie on the Cytoplasmic side of the membrane. Residues 154-174 (FGTLNQLGIVIGILVAQIFGL) traverse the membrane as a helical segment. A D-glucose-binding site is contributed by Gln159. The Extracellular segment spans residues 175–183 (KVILGTEDL). A helical transmembrane segment spans residues 184–204 (WPLLLGFTILPAIIQCAALPF). The Cytoplasmic segment spans residues 205 to 269 (CPESPRFLLI…LFRAPNYRQP (65 aa)). Thr232 is subject to Phosphothreonine. A helical transmembrane segment spans residues 270–290 (IIISIMLQLSQQLSGINAVFY). An important for selectivity against fructose region spans residues 277–279 (QLS). D-glucose is bound by residues 280 to 281 (QQ) and Asn286. At 291–304 (YSTGIFKDAGVQEP) the chain is on the extracellular side. A helical transmembrane segment spans residues 305–325 (VYATIGAGVVNTIFTVVSVFL). A D-glucose-binding site is contributed by Asn315. The Cytoplasmic portion of the chain corresponds to 326–331 (VERAGR). A helical membrane pass occupies residues 332–352 (RTLHLIGLGGMAFCSILMTIS). Residues 353–363 (LLLKDNYSWMS) are Extracellular-facing. N-linked (GlcNAc...) asparagine glycosylation occurs at Asn358. Residues 364-389 (FICIGAILVFVAFFEIGPGPIPWFIV) traverse the membrane as a helical segment. Residues Glu378 and Trp386 each contribute to the D-glucose site. The Cytoplasmic segment spans residues 390-399 (AELFGQGPRP). Residues 400-420 (AAMAVAGCSNWTSNFLVGLLF) traverse the membrane as a helical segment. The Extracellular portion of the chain corresponds to 421 to 429 (PSAAFYLGA). The chain crosses the membrane as a helical span at residues 430–450 (YVFIVFTVFLVIFWVFTFFKV). The Cytoplasmic portion of the chain corresponds to 451 to 494 (PETRGRTFEEITRAFEGQTQTGTRGEKGPIMEMNSIQPTKDTNA). A disordered region spans residues 469 to 494 (TQTGTRGEKGPIMEMNSIQPTKDTNA). Over residues 484 to 494 (NSIQPTKDTNA) the composition is skewed to polar residues. Ser485 carries the phosphoserine modification. At Thr492 the chain carries Phosphothreonine.

It belongs to the major facilitator superfamily. Sugar transporter (TC 2.A.1.1) family. Glucose transporter subfamily. As to quaternary structure, interacts with SMIM43; the interaction may promote SLC2A1-mediated glucose transport to meet the energy needs of mesendoderm differentiation.

The protein resides in the cell membrane. The protein localises to the perikaryon. Its subcellular location is the cell projection. The catalysed reaction is D-glucose(out) = D-glucose(in). It carries out the reaction D-galactose(in) = D-galactose(out). With respect to regulation, deoxyglucose transport is inhibited by D-glucose, D-galactose and maltose. Galactose transport is inhibited by D-glucose and maltose. Functionally, facilitative glucose transporter. Can also mediate the uptake of various other monosaccharides across the cell membrane. Mediates the uptake of glucose, 2-deoxyglucose, galactose, mannose, xylose and fucose, and probably also dehydroascorbate. Does not mediate fructose transport. Required for mesendoderm differentiation. The chain is Solute carrier family 2, facilitated glucose transporter member 3 from Bos taurus (Bovine).